We begin with the raw amino-acid sequence, 593 residues long: Serine/threonine-protein kinase SSN3 (593 aa).

The region spanning 90 to 489 is the Protein kinase domain; that stretch reads YEIIGYIAAG…AIDALDHVYF (400 aa). 96–104 is an ATP binding site; that stretch reads IAAGTYGKV. The segment at 161 to 199 is disordered; that stretch reads KPSHKRFTPPNNSNSTQIRSNSGSETNVRINSSSITNNS. Residues 169–185 show a composition bias toward polar residues; the sequence is PPNNSNSTQIRSNSGSE. Positions 186-199 are enriched in low complexity; sequence TNVRINSSSITNNS. K211 serves as a coordination point for ATP. D312 acts as the Proton acceptor in catalysis. Disordered stretches follow at residues 517-551 and 569-593; these read DNDI…NMNG and AAVS…KKRK. Residues 518 to 536 show a composition bias toward polar residues; that stretch reads NDITNVGNDNNQANHSQKQ. The segment covering 540 to 551 has biased composition (low complexity); the sequence is GNNNNKNGNMNG. Residues 573-585 are compositionally biased toward polar residues; that stretch reads GNGNNPTSNTATG.

The protein belongs to the protein kinase superfamily. CMGC Ser/Thr protein kinase family. CDC2/CDKX subfamily. In terms of assembly, component of the SRB8-11 complex, a regulatory module of the Mediator complex. Mg(2+) serves as cofactor.

It localises to the nucleus. It carries out the reaction L-seryl-[protein] + ATP = O-phospho-L-seryl-[protein] + ADP + H(+). The catalysed reaction is L-threonyl-[protein] + ATP = O-phospho-L-threonyl-[protein] + ADP + H(+). It catalyses the reaction [DNA-directed RNA polymerase] + ATP = phospho-[DNA-directed RNA polymerase] + ADP + H(+). Component of the SRB8-11 complex. The SRB8-11 complex is a regulatory module of the Mediator complex which is itself involved in regulation of basal and activated RNA polymerase II-dependent transcription. The SRB8-11 complex may be involved in the transcriptional repression of a subset of genes regulated by Mediator. It may inhibit the association of the Mediator complex with RNA polymerase II to form the holoenzyme complex. The SRB8-11 complex phosphorylates the C-terminal domain (CTD) of the largest subunit of RNA polymerase II. The polypeptide is Serine/threonine-protein kinase SSN3 (SSN3) (Kluyveromyces lactis (strain ATCC 8585 / CBS 2359 / DSM 70799 / NBRC 1267 / NRRL Y-1140 / WM37) (Yeast)).